Reading from the N-terminus, the 337-residue chain is Phenylalanine--tRNA ligase alpha subunit (337 aa).

Residue Glu252 participates in Mg(2+) binding.

The protein belongs to the class-II aminoacyl-tRNA synthetase family. Phe-tRNA synthetase alpha subunit type 1 subfamily. As to quaternary structure, tetramer of two alpha and two beta subunits. Requires Mg(2+) as cofactor.

The protein localises to the cytoplasm. It catalyses the reaction tRNA(Phe) + L-phenylalanine + ATP = L-phenylalanyl-tRNA(Phe) + AMP + diphosphate + H(+). This is Phenylalanine--tRNA ligase alpha subunit from Francisella tularensis subsp. novicida (strain U112).